A 91-amino-acid polypeptide reads, in one-letter code: Small ribosomal subunit protein bS20 (91 aa).

Residues 1–23 form a disordered region; it reads MANTPSAKKRAKQAEKRRSHNAS. Residues 7-20 are compositionally biased toward basic residues; sequence AKKRAKQAEKRRSH.

Belongs to the bacterial ribosomal protein bS20 family.

Functionally, binds directly to 16S ribosomal RNA. The protein is Small ribosomal subunit protein bS20 of Pseudomonas aeruginosa (strain LESB58).